Reading from the N-terminus, the 240-residue chain is Flavin-dependent thymidylate synthase (240 aa).

The ThyX domain occupies 13–235 (ITVELVKHSA…PETHAAFEKQ (223 aa)). FAD-binding positions include serine 64, 87–89 (RHR), and glutamate 95. Residues 84-87 (EFMR), 95-99 (EESGR), and arginine 167 contribute to the dUMP site. The ThyX motif motif lies at 87–97 (RHRIASYNEES). FAD-binding positions include 183–185 (NAR) and asparagine 189. Arginine 194 contributes to the dUMP binding site. The Involved in ionization of N3 of dUMP, leading to its activation role is filled by arginine 194.

The protein belongs to the thymidylate synthase ThyX family. As to quaternary structure, homotetramer. FAD is required as a cofactor.

The enzyme catalyses dUMP + (6R)-5,10-methylene-5,6,7,8-tetrahydrofolate + NADPH + H(+) = dTMP + (6S)-5,6,7,8-tetrahydrofolate + NADP(+). The protein operates within pyrimidine metabolism; dTTP biosynthesis. Functionally, catalyzes the reductive methylation of 2'-deoxyuridine-5'-monophosphate (dUMP) to 2'-deoxythymidine-5'-monophosphate (dTMP) while utilizing 5,10-methylenetetrahydrofolate (mTHF) as the methyl donor, and NADPH and FADH(2) as the reductant. The polypeptide is Flavin-dependent thymidylate synthase (Tropheryma whipplei (strain TW08/27) (Whipple's bacillus)).